The following is a 698-amino-acid chain: Elongation factor G 1 (698 aa).

A tr-type G domain is found at 8–290; it reads ERYRNIGICA…AVVEFLPAPV (283 aa). Residues 17–24, 88–92, and 142–145 contribute to the GTP site; these read AHVDAGKT, DTPGH, and NKMD.

Belongs to the TRAFAC class translation factor GTPase superfamily. Classic translation factor GTPase family. EF-G/EF-2 subfamily.

The protein localises to the cytoplasm. Catalyzes the GTP-dependent ribosomal translocation step during translation elongation. During this step, the ribosome changes from the pre-translocational (PRE) to the post-translocational (POST) state as the newly formed A-site-bound peptidyl-tRNA and P-site-bound deacylated tRNA move to the P and E sites, respectively. Catalyzes the coordinated movement of the two tRNA molecules, the mRNA and conformational changes in the ribosome. In Shewanella oneidensis (strain ATCC 700550 / JCM 31522 / CIP 106686 / LMG 19005 / NCIMB 14063 / MR-1), this protein is Elongation factor G 1.